The sequence spans 167 residues: Leptin (167 aa).

Residues M1–A21 form the signal peptide. C117 and C167 are joined by a disulfide.

It belongs to the leptin family.

It is found in the secreted. Key player in the regulation of energy balance and body weight control. Once released into the circulation, has central and peripheral effects by binding LEPR, found in many tissues, which results in the activation of several major signaling pathways. In the hypothalamus, acts as an appetite-regulating factor that induces a decrease in food intake and an increase in energy consumption by inducing anorexinogenic factors and suppressing orexigenic neuropeptides, also regulates bone mass and secretion of hypothalamo-pituitary-adrenal hormones. In the periphery, increases basal metabolism, influences reproductive function, regulates pancreatic beta-cell function and insulin secretion, is pro-angiogenic for endothelial cell and affects innate and adaptive immunity. In the arcuate nucleus of the hypothalamus, activates by depolarization POMC neurons inducing FOS and SOCS3 expression to release anorexigenic peptides and inhibits by hyperpolarization NPY neurons inducing SOCS3 with a consequent reduction on release of orexigenic peptides. In addition to its known satiety inducing effect, has a modulatory role in nutrient absorption. In the intestine, reduces glucose absorption by enterocytes by activating PKC and leading to a sequential activation of p38, PI3K and ERK signaling pathways which exerts an inhibitory effect on glucose absorption. Acts as a growth factor on certain tissues, through the activation of different signaling pathways increases expression of genes involved in cell cycle regulation such as CCND1, via JAK2-STAT3 pathway, or VEGFA, via MAPK1/3 and PI3K-AKT1 pathways. May also play an apoptotic role via JAK2-STAT3 pathway and up-regulation of BIRC5 expression. Pro-angiogenic, has mitogenic activity on vascular endothelial cells and plays a role in matrix remodeling by regulating the expression of matrix metalloproteinases (MMPs) and tissue inhibitors of metalloproteinases (TIMPs). In innate immunity, modulates the activity and function of neutrophils by increasing chemotaxis and the secretion of oxygen radicals. Increases phagocytosis by macrophages and enhances secretion of pro-inflammatory mediators. Increases cytotoxic ability of NK cells. Plays a pro-inflammatory role, in synergy with IL1B, by inducing NOS2 which promotes the production of IL6, IL8 and Prostaglandin E2, through a signaling pathway that involves JAK2, PI3K, MAP2K1/MEK1 and MAPK14/p38. In adaptive immunity, promotes the switch of memory T-cells towards T helper-1 cell immune responses. Increases CD4(+)CD25(-) T-cell proliferation and reduces autophagy during TCR (T-cell receptor) stimulation, through MTOR signaling pathway activation and BCL2 up-regulation. The sequence is that of Leptin (LEP) from Phoca vitulina (Harbor seal).